Reading from the N-terminus, the 412-residue chain is Serine hydroxymethyltransferase (412 aa).

(6S)-5,6,7,8-tetrahydrofolate is bound by residues Leu-117 and 121–123 (GHL). Residue Lys-226 is modified to N6-(pyridoxal phosphate)lysine.

The protein belongs to the SHMT family. In terms of assembly, homodimer. Pyridoxal 5'-phosphate is required as a cofactor.

The protein localises to the cytoplasm. It catalyses the reaction (6R)-5,10-methylene-5,6,7,8-tetrahydrofolate + glycine + H2O = (6S)-5,6,7,8-tetrahydrofolate + L-serine. It participates in one-carbon metabolism; tetrahydrofolate interconversion. It functions in the pathway amino-acid biosynthesis; glycine biosynthesis; glycine from L-serine: step 1/1. Functionally, catalyzes the reversible interconversion of serine and glycine with tetrahydrofolate (THF) serving as the one-carbon carrier. This reaction serves as the major source of one-carbon groups required for the biosynthesis of purines, thymidylate, methionine, and other important biomolecules. Also exhibits THF-independent aldolase activity toward beta-hydroxyamino acids, producing glycine and aldehydes, via a retro-aldol mechanism. This is Serine hydroxymethyltransferase from Staphylococcus aureus (strain MW2).